The chain runs to 203 residues: dITP/XTP pyrophosphatase (203 aa).

Position 8–13 (8–13) interacts with substrate; it reads TANKGK. Mg(2+) contacts are provided by E41 and D70. The active-site Proton acceptor is D70. Residues S71, 153 to 156, K176, and 181 to 182 each bind substrate; these read FGYD and HR.

The protein belongs to the HAM1 NTPase family. In terms of assembly, homodimer. It depends on Mg(2+) as a cofactor.

It carries out the reaction XTP + H2O = XMP + diphosphate + H(+). It catalyses the reaction dITP + H2O = dIMP + diphosphate + H(+). The enzyme catalyses ITP + H2O = IMP + diphosphate + H(+). Functionally, pyrophosphatase that catalyzes the hydrolysis of nucleoside triphosphates to their monophosphate derivatives, with a high preference for the non-canonical purine nucleotides XTP (xanthosine triphosphate), dITP (deoxyinosine triphosphate) and ITP. Seems to function as a house-cleaning enzyme that removes non-canonical purine nucleotides from the nucleotide pool, thus preventing their incorporation into DNA/RNA and avoiding chromosomal lesions. The polypeptide is dITP/XTP pyrophosphatase (Listeria monocytogenes serotype 4b (strain F2365)).